Reading from the N-terminus, the 294-residue chain is MPWLQLKVIAPRRYVESIENALLAAGAASVTLQDNADQPIFEPGLGETPLWDNVKITGLFDAEIDTAKAIALAERRFGNPLPQHQWEQLEDKDWEREWMSNYHAIRCGERLWICPSWQEPPEPDKINLMLDPGLAFGTGTHPTTFLCMQWIDQQDFTDLEVIDYGCGSGILGIAALLLGARKVVGVDIDPQALLATTENAKRNQLPADAMPVYLPPHCPATQVDVMLANILAGPLAELAPTLSNMTKPGGKLCLSGILSVQAQSVMDAYAPWFDFDPVATHEEWVRLTAIKARA.

Residues Thr144, Gly165, Asp187, and Asn229 each coordinate S-adenosyl-L-methionine.

Belongs to the methyltransferase superfamily. PrmA family.

Its subcellular location is the cytoplasm. It carries out the reaction L-lysyl-[protein] + 3 S-adenosyl-L-methionine = N(6),N(6),N(6)-trimethyl-L-lysyl-[protein] + 3 S-adenosyl-L-homocysteine + 3 H(+). In terms of biological role, methylates ribosomal protein L11. This Cellvibrio japonicus (strain Ueda107) (Pseudomonas fluorescens subsp. cellulosa) protein is Ribosomal protein L11 methyltransferase.